The following is a 469-amino-acid chain: Septin homolog spn1 (469 aa).

A disordered region spans residues 1 to 58 (MASMVLADGMPTVKDDSTRSRGSDVDSFTSTDNVTQINVEAAISENKNEEKPIQDNSE). A compositionally biased stretch (basic and acidic residues) spans 13–24 (VKDDSTRSRGSD). Polar residues predominate over residues 26–38 (DSFTSTDNVTQIN). Residues 92–367 (QGFNFNVLVL…EAYRTERLLS (276 aa)) form the Septin-type G domain. Residues 102 to 109 (GESGSGKS) form a G1 motif region. Residues 102-109 (GESGSGKS), threonine 139, glycine 165, 244-252 (KADTLTDDE), and arginine 317 contribute to the GTP site. Residues 162 to 165 (DTPG) form a G3 motif region. The interval 243-246 (AKAD) is G4 motif. The stretch at 383–469 (SAKLEEERAL…NEKSKRKFFK (87 aa)) forms a coiled coil.

This sequence belongs to the TRAFAC class TrmE-Era-EngA-EngB-Septin-like GTPase superfamily. Septin GTPase family. Component of the septin complex composed of two copies of each spn1, spn2, spn3 and spn4.

It localises to the cytoplasm. It is found in the cell cortex. Plays a role in the cell cycle. Involved in a late stage of septum formation leading to the separation of the daughter cells. In Schizosaccharomyces pombe (strain 972 / ATCC 24843) (Fission yeast), this protein is Septin homolog spn1 (spn1).